Consider the following 150-residue polypeptide: D-aminoacyl-tRNA deacylase (150 aa).

The short motif at 133–134 is the Gly-cisPro motif, important for rejection of L-amino acids element; sequence GP.

It belongs to the DTD family. As to quaternary structure, homodimer.

Its subcellular location is the cytoplasm. The catalysed reaction is glycyl-tRNA(Ala) + H2O = tRNA(Ala) + glycine + H(+). It catalyses the reaction a D-aminoacyl-tRNA + H2O = a tRNA + a D-alpha-amino acid + H(+). Functionally, an aminoacyl-tRNA editing enzyme that deacylates mischarged D-aminoacyl-tRNAs. Also deacylates mischarged glycyl-tRNA(Ala), protecting cells against glycine mischarging by AlaRS. Acts via tRNA-based rather than protein-based catalysis; rejects L-amino acids rather than detecting D-amino acids in the active site. By recycling D-aminoacyl-tRNA to D-amino acids and free tRNA molecules, this enzyme counteracts the toxicity associated with the formation of D-aminoacyl-tRNA entities in vivo and helps enforce protein L-homochirality. The sequence is that of D-aminoacyl-tRNA deacylase from Kocuria rhizophila (strain ATCC 9341 / DSM 348 / NBRC 103217 / DC2201).